The sequence spans 461 residues: Toxin CfTX-B (461 aa).

Positions 1 to 24 (MDPRISSRLRALALLVFVISITDG) are cleaved as a signal peptide. A propeptide spanning residues 25–31 (IPNRAKR) is cleaved from the precursor.

It belongs to the jellyfish toxin family. Type II subfamily. In terms of assembly, oligomer. In terms of processing, contains 2 disulfide bonds. As to expression, nematocytes.

It is found in the secreted. The protein resides in the nematocyst. The protein localises to the target cell membrane. The fraction containing this toxin and CfTX-B shows potent hemolytic activity. This fraction causes minor effects on the cardiovascular system of anesthetized rats (at 25 ug/kg), since it has no significant effects on heart rate but produces relatively small increases in mean arterial pressure. The polypeptide is Toxin CfTX-B (Chironex fleckeri (Australian box jellyfish)).